The sequence spans 556 residues: Formate--tetrahydrofolate ligase (556 aa).

65–72 (TPAGEGKS) is a binding site for ATP.

The protein belongs to the formate--tetrahydrofolate ligase family.

The enzyme catalyses (6S)-5,6,7,8-tetrahydrofolate + formate + ATP = (6R)-10-formyltetrahydrofolate + ADP + phosphate. The protein operates within one-carbon metabolism; tetrahydrofolate interconversion. The chain is Formate--tetrahydrofolate ligase from Streptococcus agalactiae serotype V (strain ATCC BAA-611 / 2603 V/R).